A 152-amino-acid chain; its full sequence is Deoxyuridine 5'-triphosphate nucleotidohydrolase (152 aa).

Substrate-binding positions include 71-73 (RSG), Asn84, 88-90 (LID), and Met98.

This sequence belongs to the dUTPase family. Requires Mg(2+) as cofactor.

The enzyme catalyses dUTP + H2O = dUMP + diphosphate + H(+). It functions in the pathway pyrimidine metabolism; dUMP biosynthesis; dUMP from dCTP (dUTP route): step 2/2. Its function is as follows. This enzyme is involved in nucleotide metabolism: it produces dUMP, the immediate precursor of thymidine nucleotides and it decreases the intracellular concentration of dUTP so that uracil cannot be incorporated into DNA. The sequence is that of Deoxyuridine 5'-triphosphate nucleotidohydrolase from Coxiella burnetii (strain Dugway 5J108-111).